The following is a 208-amino-acid chain: Pyridoxal 5'-phosphate synthase subunit PdxT (208 aa).

46 to 48 (GES) serves as a coordination point for L-glutamine. The active-site Nucleophile is the cysteine 78. L-glutamine is bound by residues arginine 105 and 156–157 (IR). Catalysis depends on charge relay system residues histidine 192 and glutamate 194.

Belongs to the glutaminase PdxT/SNO family. In the presence of PdxS, forms a dodecamer of heterodimers. Only shows activity in the heterodimer.

It carries out the reaction aldehydo-D-ribose 5-phosphate + D-glyceraldehyde 3-phosphate + L-glutamine = pyridoxal 5'-phosphate + L-glutamate + phosphate + 3 H2O + H(+). The catalysed reaction is L-glutamine + H2O = L-glutamate + NH4(+). Its pathway is cofactor biosynthesis; pyridoxal 5'-phosphate biosynthesis. In terms of biological role, catalyzes the hydrolysis of glutamine to glutamate and ammonia as part of the biosynthesis of pyridoxal 5'-phosphate. The resulting ammonia molecule is channeled to the active site of PdxS. This chain is Pyridoxal 5'-phosphate synthase subunit PdxT, found in Bifidobacterium adolescentis (strain ATCC 15703 / DSM 20083 / NCTC 11814 / E194a).